A 459-amino-acid chain; its full sequence is tRNA modification GTPase MnmE (459 aa).

Residues Arg-25, Glu-87, and Arg-126 each coordinate (6S)-5-formyl-5,6,7,8-tetrahydrofolate. The TrmE-type G domain maps to 221–380 (GLKVAIVGRP…LETAILEIVQ (160 aa)). Asn-231 lines the K(+) pocket. GTP contacts are provided by residues 231–236 (NVGKSS), 250–256 (TDLPGTT), and 275–278 (DTAG). Ser-235 provides a ligand contact to Mg(2+). K(+)-binding residues include Thr-250, Leu-252, and Thr-255. Thr-256 contacts Mg(2+). Lys-459 contributes to the (6S)-5-formyl-5,6,7,8-tetrahydrofolate binding site.

This sequence belongs to the TRAFAC class TrmE-Era-EngA-EngB-Septin-like GTPase superfamily. TrmE GTPase family. In terms of assembly, homodimer. Heterotetramer of two MnmE and two MnmG subunits. K(+) is required as a cofactor.

The protein localises to the cytoplasm. In terms of biological role, exhibits a very high intrinsic GTPase hydrolysis rate. Involved in the addition of a carboxymethylaminomethyl (cmnm) group at the wobble position (U34) of certain tRNAs, forming tRNA-cmnm(5)s(2)U34. The sequence is that of tRNA modification GTPase MnmE from Nostoc sp. (strain PCC 7120 / SAG 25.82 / UTEX 2576).